A 1643-amino-acid polypeptide reads, in one-letter code: Neurexin-3 (1643 aa).

An N-terminal signal peptide occupies residues Met1 to Gly27. A Laminin G-like 1 domain is found at Leu28–Cys202. Residues Leu28 to Thr1568 lie on the Extracellular side of the membrane. Asn58 and Asn105 each carry an N-linked (GlcNAc...) asparagine glycan. The region spanning Ala198–Ser235 is the EGF-like 1 domain. 3 disulfides stabilise this stretch: Cys202/Cys213, Cys207/Cys222, and Cys224/Cys234. Laminin G-like domains are found at residues Val258–Cys440 and Asp447–Cys639. Ca(2+) contacts are provided by Asp304, Leu321, and Met374. Disulfide bonds link Cys404–Cys440, Cys610–Cys639, Cys647–Cys658, Cys652–Cys667, and Cys669–Cys679. The 38-residue stretch at Ser643–Glu680 folds into the EGF-like 2 domain. 2 Laminin G-like domains span residues Ile685–Cys857 and Asp871–Cys1046. Ca(2+) is bound by residues Asp732 and Leu749. The N-linked (GlcNAc...) asparagine glycan is linked to Asn757. Ca(2+) is bound at residue Arg807. 4 disulfides stabilise this stretch: Cys1018–Cys1046, Cys1053–Cys1064, Cys1058–Cys1073, and Cys1075–Cys1085. The EGF-like 3 domain occupies Pro1049–Asn1086. Positions Ala1090–Val1260 constitute a Laminin G-like 6 domain. Ca(2+) is bound by residues Asp1142 and Ile1159. Asn1189 carries an N-linked (GlcNAc...) asparagine glycan. Residues Ile1211 and Asn1213 each coordinate Ca(2+). N-linked (GlcNAc...) asparagine glycosylation is found at Asn1257 and Asn1301. A disordered region spans residues Ala1294 to Ala1318. A compositionally biased stretch (polar residues) spans Ser1303–Ala1318. O-linked (Xyl...) (heparan sulfate) serine glycosylation is present at Ser1317. Residues Gly1569 to Met1589 traverse the membrane as a helical segment. Residues Tyr1590–Val1643 lie on the Cytoplasmic side of the membrane. Residues Asn1611 to Val1643 form a disordered region.

The protein belongs to the neurexin family. As to quaternary structure, the laminin G-like domain 2 binds to NXPH1. Specific isoforms bind to alpha-dystroglycan. The cytoplasmic C-terminal region binds to CASK. Specific isoforms bind neuroligins NLGN1, NLGN2 and NLGN3. Interacts with CLSTN3. Post-translationally, O-glycosylated; contains heparan sulfate. Heparan sulfate attachment is required for synapse development by mediating interactions with neuroligins. As to expression, expressed in the blood vessel walls (at protein level). Highly expressed in brain, lung, and pancreas; a lower level of expression is detectable in heart, placenta, liver, and kidney, whereas no expression can be observed in skeletal muscle. Isoform 4a is heart-specific.

It localises to the presynaptic cell membrane. Functionally, neuronal cell surface protein that may be involved in cell recognition and cell adhesion. May mediate intracellular signaling. The chain is Neurexin-3 (NRXN3) from Homo sapiens (Human).